Consider the following 248-residue polypeptide: E3 ubiquitin-protein ligase BIG BROTHER (248 aa).

Residues 197-238 form an RING-type; atypical zinc finger; sequence CVICQLKYKIGERQMNLPCKHVYHSECISKWLSINKVCPVCN.

As to quaternary structure, interacts with the E2 ubiquitin conjugating enzyme UBC10 via the RING domain. Interacts with DA1. Auto-ubiquitinated. In terms of tissue distribution, mostly expressed in inflorescence, and, to a lower extent, in seedlings, roots, stems, leaves and siliques.

It carries out the reaction S-ubiquitinyl-[E2 ubiquitin-conjugating enzyme]-L-cysteine + [acceptor protein]-L-lysine = [E2 ubiquitin-conjugating enzyme]-L-cysteine + N(6)-ubiquitinyl-[acceptor protein]-L-lysine.. It functions in the pathway protein modification; protein ubiquitination. Its function is as follows. E3 ubiquitin-protein ligase that limits organ size, and possibly seed size, in a dose-dependent manner. Negatively regulates the duration of cell proliferation in leaves and petals independently of the major phytohormones (e.g. auxin, cytokinin, gibberellin, brassinosteroids, ethylene, abscisic acid, jasmonic acid), probably by targeting growth stimulators for degradation. Limits the proliferation of root meristematic cells. Polyubiquitinates DA1. Involved in the promotion of leaf senescence, in addition to its function in restricting plant growth. Possesses E3 ubiquitin-protein ligase activity in vitro. This is E3 ubiquitin-protein ligase BIG BROTHER (BB) from Arabidopsis thaliana (Mouse-ear cress).